The sequence spans 393 residues: Decapping nuclease dom-3 (393 aa).

Residues 1–37 (MSHYGGNPRGNSSHQFGRKDFQQSDSKHIPKITGQPL) form a disordered region. Positions 17-28 (GRKDFQQSDSKH) are enriched in basic and acidic residues. Substrate-binding positions include arginine 74, glutamate 113, and 144–146 (WRG). Glutamate 205, glutamate 257, aspartate 259, glutamate 269, and leucine 270 together coordinate Mg(2+). Residue glutamate 257 participates in substrate binding. The substrate site is built by lysine 271 and glutamine 293.

This sequence belongs to the DXO/Dom3Z family. Mg(2+) serves as cofactor.

It catalyses the reaction a 5'-end NAD(+)-phospho-ribonucleoside in mRNA + H2O = a 5'-end phospho-ribonucleoside in mRNA + NAD(+) + H(+). The catalysed reaction is a 5'-end (N(7)-methyl 5'-triphosphoguanosine)-ribonucleoside-ribonucleotide in mRNA + H2O = a (N(7)-methyl 5'-triphosphoguanosine)-nucleoside + a 5'-end phospho-ribonucleoside in mRNA + H(+). It carries out the reaction a 5'-end triphospho-ribonucleoside in mRNA + H2O = a 5'-end phospho-ribonucleoside in mRNA + diphosphate + H(+). Functionally, decapping enzyme for NAD-capped RNAs: specifically hydrolyzes the nicotinamide adenine dinucleotide (NAD) cap from a subset of RNAs by removing the entire NAD moiety from the 5'-end of an NAD-capped RNA. The NAD-cap is present at the 5'-end of some RNAs and snoRNAs. In contrast to the canonical 5'-end N7 methylguanosine (m7G) cap, the NAD cap promotes mRNA decay. Also acts as a non-canonical decapping enzyme that removes the entire cap structure of m7G capped or incompletely capped RNAs and mediates their subsequent degradation. Specifically degrades pre-mRNAs with a defective 5'-end m7G cap and is part of a pre-mRNA capping quality control. Also possesses RNA 5'-pyrophosphohydrolase activity by hydrolyzing the 5'-end triphosphate to release pyrophosphates. The chain is Decapping nuclease dom-3 from Caenorhabditis elegans.